Reading from the N-terminus, the 187-residue chain is tRNA (mnm(5)s(2)U34)-methyltransferase (187 aa).

Positions 31, 33, 51, 53, 77, and 78 each coordinate S-adenosyl-L-methionine.

This sequence belongs to the methyltransferase superfamily. MnmM family. In terms of assembly, homodimer.

It carries out the reaction 5-aminomethyl-2-thiouridine(34) in tRNA + S-adenosyl-L-methionine = 5-methylaminomethyl-2-thiouridine(34) in tRNA + S-adenosyl-L-homocysteine + H(+). The protein operates within tRNA modification. Functionally, involved in the biosynthesis of 5-methylaminomethyl-2-thiouridine (mnm(5)s(2)U) at the wobble position (U34) in tRNA. Catalyzes the transfer of a methyl group from S-adenosyl-L-methionine to nm(5)s(2)U34 to form mnm(5)s(2)U34. The protein is tRNA (mnm(5)s(2)U34)-methyltransferase of Staphylococcus aureus (strain NCTC 8325 / PS 47).